The primary structure comprises 130 residues: Small ribosomal subunit protein uS9 (130 aa).

A compositionally biased stretch (basic and acidic residues) spans 99–110; it reads KKAGFLTRDPRM. The disordered stretch occupies residues 99 to 130; that stretch reads KKAGFLTRDPRMKERKKYGLKKARRAPQFSKR. Positions 111 to 130 are enriched in basic residues; sequence KERKKYGLKKARRAPQFSKR.

This sequence belongs to the universal ribosomal protein uS9 family.

The polypeptide is Small ribosomal subunit protein uS9 (Clostridium botulinum (strain Eklund 17B / Type B)).